A 269-amino-acid polypeptide reads, in one-letter code: MVRSILNKYNIKGGTFDQHFLIDIGYLDRIVVAAELSPQDTILEIGAGIGNLTERLARRAKKVIAVELDPALVSVLHDRFDKVENIEVIAGDALKVDFPEFDKVVSNLPYSISSEITFKLLRYKFKLGILMYQYEFAARMVSPPGRKDYSRLTVDTYYFADASILMKVPKGAFQPAPEVDSAVVKLVPRPSPFEVRDEAFFLEFVAAVFSQRRKKLRNSILNTNSMLKIPDIKEVVNQLPDDFVNKRAENLTPEELASVANMLFDLKSR.

Positions 19, 21, 46, 67, 92, and 107 each coordinate S-adenosyl-L-methionine.

It belongs to the class I-like SAM-binding methyltransferase superfamily. rRNA adenine N(6)-methyltransferase family. RsmA subfamily.

The protein localises to the cytoplasm. In terms of biological role, specifically dimethylates two adjacent adenosines in the loop of a conserved hairpin near the 3'-end of 16S rRNA in the 30S particle. May play a critical role in biogenesis of 30S subunits. This chain is Probable ribosomal RNA small subunit methyltransferase A, found in Methanosarcina acetivorans (strain ATCC 35395 / DSM 2834 / JCM 12185 / C2A).